Consider the following 163-residue polypeptide: 2-C-methyl-D-erythritol 2,4-cyclodiphosphate synthase (163 aa).

2 residues coordinate a divalent metal cation: aspartate 9 and histidine 11. 4-CDP-2-C-methyl-D-erythritol 2-phosphate is bound by residues 9–11 and 36–37; these read DVH and HS. Histidine 44 serves as a coordination point for a divalent metal cation. 4-CDP-2-C-methyl-D-erythritol 2-phosphate is bound by residues 58-60, 63-67, 134-137, phenylalanine 141, and arginine 144; these read DIG, FPDDD, and TTSE.

The protein belongs to the IspF family. As to quaternary structure, homotrimer. Requires a divalent metal cation as cofactor.

The catalysed reaction is 4-CDP-2-C-methyl-D-erythritol 2-phosphate = 2-C-methyl-D-erythritol 2,4-cyclic diphosphate + CMP. The protein operates within isoprenoid biosynthesis; isopentenyl diphosphate biosynthesis via DXP pathway; isopentenyl diphosphate from 1-deoxy-D-xylulose 5-phosphate: step 4/6. In terms of biological role, involved in the biosynthesis of isopentenyl diphosphate (IPP) and dimethylallyl diphosphate (DMAPP), two major building blocks of isoprenoid compounds. Catalyzes the conversion of 4-diphosphocytidyl-2-C-methyl-D-erythritol 2-phosphate (CDP-ME2P) to 2-C-methyl-D-erythritol 2,4-cyclodiphosphate (ME-CPP) with a corresponding release of cytidine 5-monophosphate (CMP). This is 2-C-methyl-D-erythritol 2,4-cyclodiphosphate synthase from Halorhodospira halophila (strain DSM 244 / SL1) (Ectothiorhodospira halophila (strain DSM 244 / SL1)).